The following is a 335-amino-acid chain: NADH-quinone oxidoreductase subunit H (335 aa).

The next 8 helical transmembrane spans lie at valine 11–leucine 31, valine 81–isoleucine 101, isoleucine 114–glycine 134, valine 154–phenylalanine 174, leucine 187–valine 207, phenylalanine 238–phenylalanine 258, glutamine 270–leucine 290, and tryptophan 307–tryptophan 327.

The protein belongs to the complex I subunit 1 family. In terms of assembly, NDH-1 is composed of 13 different subunits. Subunits NuoA, H, J, K, L, M, N constitute the membrane sector of the complex.

The protein localises to the cell inner membrane. It carries out the reaction a quinone + NADH + 5 H(+)(in) = a quinol + NAD(+) + 4 H(+)(out). Functionally, NDH-1 shuttles electrons from NADH, via FMN and iron-sulfur (Fe-S) centers, to quinones in the respiratory chain. The immediate electron acceptor for the enzyme in this species is believed to be ubiquinone. Couples the redox reaction to proton translocation (for every two electrons transferred, four hydrogen ions are translocated across the cytoplasmic membrane), and thus conserves the redox energy in a proton gradient. This subunit may bind ubiquinone. The protein is NADH-quinone oxidoreductase subunit H of Pseudomonas fluorescens (strain ATCC BAA-477 / NRRL B-23932 / Pf-5).